A 124-amino-acid chain; its full sequence is Profilin-2 (124 aa).

This sequence belongs to the profilin family. As to quaternary structure, occurs in many kinds of cells as a complex with monomeric actin in a 1:1 ratio. Interacts with forH.

Its subcellular location is the cytoplasm. The protein resides in the cytoskeleton. Binds to actin and affects the structure of the cytoskeleton. At high concentrations, profilin prevents the polymerization of actin, whereas it enhances it at low concentrations. By binding to PIP2, it inhibits the formation of IP3 and DG. This is Profilin-2 (proB) from Dictyostelium discoideum (Social amoeba).